Reading from the N-terminus, the 186-residue chain is Ribosome-recycling factor (186 aa).

It belongs to the RRF family.

The protein resides in the cytoplasm. Responsible for the release of ribosomes from messenger RNA at the termination of protein biosynthesis. May increase the efficiency of translation by recycling ribosomes from one round of translation to another. The polypeptide is Ribosome-recycling factor (Chlorobium luteolum (strain DSM 273 / BCRC 81028 / 2530) (Pelodictyon luteolum)).